A 471-amino-acid polypeptide reads, in one-letter code: Tryptophanase (471 aa).

3 positions are modified to N6-acetyllysine: K5, K115, and K156. K270 bears the N6-(pyridoxal phosphate)lysine mark. K450 carries the N6-acetyllysine modification.

It belongs to the beta-eliminating lyase family. As to quaternary structure, homotetramer. It depends on pyridoxal 5'-phosphate as a cofactor.

It catalyses the reaction L-tryptophan + H2O = indole + pyruvate + NH4(+). Its pathway is amino-acid degradation; L-tryptophan degradation via pyruvate pathway; indole and pyruvate from L-tryptophan: step 1/1. The protein is Tryptophanase of Shigella boydii serotype 18 (strain CDC 3083-94 / BS512).